The sequence spans 750 residues: Photosystem I P700 chlorophyll a apoprotein A1 (750 aa).

The next 8 helical transmembrane spans lie at 70-93 (VFSAHFGQLAVIFIWLSGMYFHGA), 156-179 (LYTTAIGGLIFAALMLFAGWFHYH), 195-219 (LNHHLAGLLGLGSLAWAGHQVHVSL), 291-309 (TAHHHLAIAVLFLVAGHMY), 346-369 (WHAQLAINLAMLGSLTIIVAHHMY), 385-411 (LSLFTHHMWIGGFLVVGAAAHAAIFMV), 433-455 (AIISHLNWVCIFLGFHSFGLYIH), and 531-549 (FLVHHIHAFTIHVTVLILL). Residues C573 and C582 each contribute to the [4Fe-4S] cluster site. The next 2 helical transmembrane spans lie at 589-610 (HVFLGLFWMYNAISVVIFHFSW) and 664-686 (LSAYGLLFLGAHFVWAFSLMFLF). A chlorophyll a'-binding site is contributed by H675. M683 and Y691 together coordinate chlorophyll a. Residue W692 coordinates phylloquinone. Residues 724 to 744 (AVGVAHYLLGGIATTWAFFLA) traverse the membrane as a helical segment.

Belongs to the PsaA/PsaB family. In terms of assembly, the PsaA/B heterodimer binds the P700 chlorophyll special pair and subsequent electron acceptors. PSI consists of a core antenna complex that captures photons, and an electron transfer chain that converts photonic excitation into a charge separation. The eukaryotic PSI reaction center is composed of at least 11 subunits. The cofactor is P700 is a chlorophyll a/chlorophyll a' dimer, A0 is one or more chlorophyll a, A1 is one or both phylloquinones and FX is a shared 4Fe-4S iron-sulfur center..

The protein resides in the plastid. Its subcellular location is the chloroplast thylakoid membrane. It carries out the reaction reduced [plastocyanin] + hnu + oxidized [2Fe-2S]-[ferredoxin] = oxidized [plastocyanin] + reduced [2Fe-2S]-[ferredoxin]. Functionally, psaA and PsaB bind P700, the primary electron donor of photosystem I (PSI), as well as the electron acceptors A0, A1 and FX. PSI is a plastocyanin-ferredoxin oxidoreductase, converting photonic excitation into a charge separation, which transfers an electron from the donor P700 chlorophyll pair to the spectroscopically characterized acceptors A0, A1, FX, FA and FB in turn. Oxidized P700 is reduced on the lumenal side of the thylakoid membrane by plastocyanin. The sequence is that of Photosystem I P700 chlorophyll a apoprotein A1 from Physcomitrium patens (Spreading-leaved earth moss).